We begin with the raw amino-acid sequence, 113 residues long: Photosystem II reaction center Psb28 protein (113 aa).

It belongs to the Psb28 family. In terms of assembly, part of the photosystem II complex.

The protein resides in the cellular thylakoid membrane. The polypeptide is Photosystem II reaction center Psb28 protein (Trichodesmium erythraeum (strain IMS101)).